The following is a 694-amino-acid chain: Lon-like protease BrxL (694 aa).

It belongs to the BrxL family.

BREX systems (bacteriophage exclusion) provide immunity against bacteriophage. Part of a type 1 BREX system which protects against dsDNA phage. This system allows phage adsorption but prevents phage DNA replication, without degradation of the phage DNA. Methylation of bacterial DNA by PglX guides self/non-self discrimination. When the brxA-brxB-brxC-pglX-pglZ-brxL genes are transformed into a susceptible E.coli strain (BW25113) they confer very high resistance to infection by bacteriophage VR7 and VpaE1, about 100-fold protection against lambda, T5 and T7 and no protection against RNA phage Qbeta, ssDNA phage M13 or dSDNA phage T4 and VR5. Glycosylated phage DNA is not susceptible to BREX. The BREX system does not confer resistance to lysogenic lambda phage, i.e. prophage that are integrated into the chromosomal DNA and then induced to form phage. Expression of this protein alone is toxic. The sequence is that of Lon-like protease BrxL from Escherichia coli O9:H4 (strain HS).